A 185-amino-acid chain; its full sequence is Translocon-associated protein subunit gamma (185 aa).

M1 bears the N-acetylmethionine mark. The Lumenal portion of the chain corresponds to 1–27 (MAPKGGPKQQSEEDLLLQDFSRNLSAK). Position 11 is a phosphoserine (S11). The chain crosses the membrane as a helical span at residues 28–48 (SSALFFGNAFIVSAIPIWLYW). The Cytoplasmic segment spans residues 49–54 (RIWHMD). A helical transmembrane segment spans residues 55 to 76 (LIQSAVLYSVMTLVSTYLVAFA). Residues 77–135 (YKNVKFVLKHKVAQKREDAVSKEVTRKLSEADNRKMSRKEKDERILWKKNEVADYEATT) lie on the Lumenal side of the membrane. S105 is modified (phosphoserine). A helical transmembrane segment spans residues 136–157 (FSIFYNNTLFLVLVIVASFFIL). Residues 158–163 (KNFNPT) lie on the Cytoplasmic side of the membrane. Residues 164 to 184 (VNYILSISASSGLIALLSTGS) traverse the membrane as a helical segment.

Belongs to the TRAP-gamma family. As to quaternary structure, heterotetramer of TRAP-alpha, TRAP-beta, TRAP-delta and TRAP-gamma.

The protein localises to the endoplasmic reticulum membrane. In terms of biological role, TRAP proteins are part of a complex whose function is to bind calcium to the ER membrane and thereby regulate the retention of ER resident proteins. The protein is Translocon-associated protein subunit gamma (SSR3) of Bos taurus (Bovine).